The primary structure comprises 293 residues: Tumor necrosis factor receptor type 1-associated DEATH domain protein (293 aa).

Positions leucine 156–serine 171 match the Nuclear export signal motif. The 91-residue stretch at threonine 200 to glutamine 290 folds into the Death domain. A Nuclear localization signal motif is present at residues lysine 216 to leucine 229.

Heterodimer with tnfrsf1a.

The protein localises to the nucleus. It is found in the cytoplasm. The protein resides in the cytoskeleton. In terms of biological role, adapter molecule for tnfrsf1a that specifically associates with the cytoplasmic domain of activated tnfrsf1a mediating its interaction with fadd. The chain is Tumor necrosis factor receptor type 1-associated DEATH domain protein from Danio rerio (Zebrafish).